The chain runs to 156 residues: Small ribosomal subunit protein uS7 (156 aa).

It belongs to the universal ribosomal protein uS7 family. As to quaternary structure, part of the 30S ribosomal subunit. Contacts proteins S9 and S11.

In terms of biological role, one of the primary rRNA binding proteins, it binds directly to 16S rRNA where it nucleates assembly of the head domain of the 30S subunit. Is located at the subunit interface close to the decoding center, probably blocks exit of the E-site tRNA. This Rhodobacter capsulatus (Rhodopseudomonas capsulata) protein is Small ribosomal subunit protein uS7.